The chain runs to 415 residues: Runt-related transcription factor 3 (415 aa).

Disordered regions lie at residues 1-48 (MRIP…GGRA), 176-266 (GPRE…FPDP), and 375-415 (NLMN…WRPY). Residues 54–182 (SMVDVLADHA…TVDGPREPRR (129 aa)) form the Runt domain. Residues 186 to 205 (KLEDQTKPFPDRFGDLERLR) show a composition bias toward basic and acidic residues. Residue K192 forms a Glycyl lysine isopeptide (Lys-Gly) (interchain with G-Cter in SUMO2) linkage. Residues 209-240 (TPSTPSPRGSLSTTSHFSSQPQTPIQGTSELN) show a composition bias toward polar residues. A Phosphoserine modification is found at S243. Residues 393–402 (SHSNSPTALS) show a composition bias toward polar residues. Over residues 406-415 (RMDEAVWRPY) the composition is skewed to basic and acidic residues.

In terms of assembly, heterodimer with CBFB. RUNX3 binds DNA as a monomer and through the Runt domain. DNA-binding is increased by heterodimerization. Interacts with TLE1 and SUV39H1. The tyrosine phosphorylated form (via runt domain) interacts with SRC (via protein kinase domain). Interacts with FYN and LCK. Interacts with FOXP3. Interacts with ZFHX3. Interacts with TBX21. Phosphorylated on tyrosine residues by SRC. Phosphorylated by LCK and FYN. Expressed in gastric cancer tissues (at protein level).

It is found in the nucleus. It localises to the cytoplasm. In terms of biological role, forms the heterodimeric complex core-binding factor (CBF) with CBFB. RUNX members modulate the transcription of their target genes through recognizing the core consensus binding sequence 5'-TGTGGT-3', or very rarely, 5'-TGCGGT-3', within their regulatory regions via their runt domain, while CBFB is a non-DNA-binding regulatory subunit that allosterically enhances the sequence-specific DNA-binding capacity of RUNX. The heterodimers bind to the core site of a number of enhancers and promoters, including murine leukemia virus, polyomavirus enhancer, T-cell receptor enhancers, LCK, IL3 and GM-CSF promoters. May be involved in the control of cellular proliferation and/or differentiation. In association with ZFHX3, up-regulates CDKN1A promoter activity following TGF-beta stimulation. CBF complexes repress ZBTB7B transcription factor during cytotoxic (CD8+) T cell development. They bind to RUNX-binding sequence within the ZBTB7B locus acting as transcriptional silencer and allowing for cytotoxic T cell differentiation. CBF complexes binding to the transcriptional silencer is essential for recruitment of nuclear protein complexes that catalyze epigenetic modifications to establish epigenetic ZBTB7B silencing. Necessary for the development and survival of sensory neurons expressing parvalbumin. The sequence is that of Runt-related transcription factor 3 (RUNX3) from Homo sapiens (Human).